A 174-amino-acid polypeptide reads, in one-letter code: Peptide methionine sulfoxide reductase MsrA (174 aa).

Cys-11 is a catalytic residue.

Belongs to the MsrA Met sulfoxide reductase family.

It catalyses the reaction L-methionyl-[protein] + [thioredoxin]-disulfide + H2O = L-methionyl-(S)-S-oxide-[protein] + [thioredoxin]-dithiol. It carries out the reaction [thioredoxin]-disulfide + L-methionine + H2O = L-methionine (S)-S-oxide + [thioredoxin]-dithiol. Its function is as follows. Has an important function as a repair enzyme for proteins that have been inactivated by oxidation. Catalyzes the reversible oxidation-reduction of methionine sulfoxide in proteins to methionine. The protein is Peptide methionine sulfoxide reductase MsrA of Pasteurella multocida (strain Pm70).